Here is an 85-residue protein sequence, read N- to C-terminus: UPF0291 protein SP_1473 (85 aa).

A disordered region spans residues 62 to 85 (TPEKLRQVQREKGLHGRSLDDPNS).

This sequence belongs to the UPF0291 family.

It localises to the cytoplasm. The protein is UPF0291 protein SP_1473 of Streptococcus pneumoniae serotype 4 (strain ATCC BAA-334 / TIGR4).